The primary structure comprises 124 residues: Small ribosomal subunit protein uS12 (124 aa).

Aspartate 89 carries the 3-methylthioaspartic acid modification.

The protein belongs to the universal ribosomal protein uS12 family. In terms of assembly, part of the 30S ribosomal subunit. Contacts proteins S8 and S17. May interact with IF1 in the 30S initiation complex.

Its function is as follows. With S4 and S5 plays an important role in translational accuracy. Functionally, interacts with and stabilizes bases of the 16S rRNA that are involved in tRNA selection in the A site and with the mRNA backbone. Located at the interface of the 30S and 50S subunits, it traverses the body of the 30S subunit contacting proteins on the other side and probably holding the rRNA structure together. The combined cluster of proteins S8, S12 and S17 appears to hold together the shoulder and platform of the 30S subunit. This is Small ribosomal subunit protein uS12 from Vibrio campbellii (strain ATCC BAA-1116).